Here is a 59-residue protein sequence, read N- to C-terminus: Salivary thrombin inhibitor XC-43 (59 aa).

The signal sequence occupies residues 1 to 23 (MNLQFLFIFIAFCVMLFAQIVTA).

In terms of assembly, interacts with human F2 (thrombin). Salivary gland (at protein level).

It localises to the secreted. Anticoagulant protein that acts as a competitive inhibitor of host thrombin. Inhibits thrombin-mediated host platelet aggregation. The sequence is that of Salivary thrombin inhibitor XC-43 from Xenopsylla cheopis (Oriental rat flea).